A 487-amino-acid polypeptide reads, in one-letter code: Sugar transporter ERD6-like 6 (487 aa).

At Ser-2 the chain carries N-acetylserine. Transmembrane regions (helical) follow at residues 46 to 66 (ISVL…GFTC), 89 to 109 (VFGS…GQIA), 115 to 135 (KGSL…ISFA), 146 to 166 (LLEG…IAEI), 178 to 198 (VNQL…LFVP), 201 to 221 (ILAV…FFIP), 284 to 304 (LMVG…GVLF), 320 to 340 (AATF…TWLV), 347 to 367 (LLLT…AAAF), 389 to 409 (VGVV…PWLI), 425 to 445 (IATL…NLLL), and 451 to 471 (GTFT…TLWV).

Belongs to the major facilitator superfamily. Sugar transporter (TC 2.A.1.1) family.

The protein resides in the membrane. In terms of biological role, sugar transporter. The protein is Sugar transporter ERD6-like 6 of Arabidopsis thaliana (Mouse-ear cress).